The chain runs to 307 residues: Small ribosomal subunit biogenesis GTPase RsgA (307 aa).

Residues 1–21 (MPSEHPFSDGISTPNPKETMN) are disordered. Positions 10 to 21 (GISTPNPKETMN) are enriched in polar residues. In terms of domain architecture, CP-type G spans 85–242 (RQDAWKTKLI…LIDSPGLQEF (158 aa)). GTP contacts are provided by residues 135-138 (NKAD) and 184-192 (GQSGMGKST). Zn(2+)-binding residues include Cys266, Cys271, His273, and Cys279.

The protein belongs to the TRAFAC class YlqF/YawG GTPase family. RsgA subfamily. In terms of assembly, monomer. Associates with 30S ribosomal subunit, binds 16S rRNA. Zn(2+) is required as a cofactor.

Its subcellular location is the cytoplasm. One of several proteins that assist in the late maturation steps of the functional core of the 30S ribosomal subunit. Helps release RbfA from mature subunits. May play a role in the assembly of ribosomal proteins into the subunit. Circularly permuted GTPase that catalyzes slow GTP hydrolysis, GTPase activity is stimulated by the 30S ribosomal subunit. The polypeptide is Small ribosomal subunit biogenesis GTPase RsgA (Neisseria gonorrhoeae (strain NCCP11945)).